We begin with the raw amino-acid sequence, 262 residues long: Small ribosomal subunit protein eS1 (262 aa).

It belongs to the eukaryotic ribosomal protein eS1 family. In terms of assembly, component of the small ribosomal subunit. Mature ribosomes consist of a small (40S) and a large (60S) subunit. The 40S subunit contains about 33 different proteins and 1 molecule of RNA (18S). The 60S subunit contains about 49 different proteins and 3 molecules of RNA (25S, 5.8S and 5S).

It localises to the cytoplasm. The sequence is that of Small ribosomal subunit protein eS1 from Brassica campestris (Field mustard).